We begin with the raw amino-acid sequence, 146 residues long: MIF-like protein mif-3 (146 aa).

The protein belongs to the MIF family.

In Caenorhabditis elegans, this protein is MIF-like protein mif-3 (mif-3).